Consider the following 363-residue polypeptide: Ankyrin repeat domain-containing protein 40 (363 aa).

An N-acetylmethionine modification is found at Met1. 2 ANK repeats span residues 9–38 and 43–72; these read EQQE…DVNS and NGWT…DREI. The interval 135–167 is disordered; that stretch reads DSTQLQNGGPSPPPVSPPADSSPPLLPPTETPL. Over residues 144-164 the composition is skewed to pro residues; sequence PSPPPVSPPADSSPPLLPPTE. The residue at position 176 (Ser176) is a Phosphoserine.

This chain is Ankyrin repeat domain-containing protein 40 (Ankrd40), found in Mus musculus (Mouse).